Consider the following 360-residue polypeptide: Outer mitochondrial transmembrane helix translocase (360 aa).

Residues 1–15 are Mitochondrial intermembrane-facing; the sequence is MVHGEAFSRPLSRNE. The chain crosses the membrane as a helical span at residues 16 to 34; sequence VVGLIFRLTIFGAVTYFTI. Residues 35–360 lie on the Cytoplasmic side of the membrane; it reads KWMVDAIDPT…QNVLMHVSLD (326 aa). 133–140 contacts ATP; it reads GPPGCGKT.

Belongs to the AAA ATPase family. MSP1 subfamily.

It localises to the mitochondrion outer membrane. The protein resides in the peroxisome membrane. It is found in the postsynaptic cell membrane. The catalysed reaction is [protein]-with a C-terminal TM segment(out) + ATP + H2O = [protein]-with a C-terminal TM segment(in) + ADP + phosphate + H(+). Functionally, outer mitochondrial translocase required to remove mislocalized tail-anchored transmembrane proteins on mitochondria. Specifically recognizes and binds tail-anchored transmembrane proteins: acts as a dislocase that mediates the ATP-dependent extraction of mistargeted tail-anchored transmembrane proteins from the mitochondrion outer membrane. Also plays a critical role in regulating the surface expression of AMPA receptors (AMPAR), thereby regulating synaptic plasticity and learning and memory. The sequence is that of Outer mitochondrial transmembrane helix translocase from Xenopus tropicalis (Western clawed frog).